We begin with the raw amino-acid sequence, 124 residues long: MPTISQLIRHGRQKQKKRTKSPALKSSPQRRGVCTRVMTFTPKKPNSALRKVARVRLTTGIEVTAYIPGEGHNLQEHNVVLIRGGRVKDLPGVRYHIIRGTLDTLGVDKRRNGRSKYGAKRPKA.

Positions 1–32 are disordered; sequence MPTISQLIRHGRQKQKKRTKSPALKSSPQRRG. Residues 9–20 show a composition bias toward basic residues; the sequence is RHGRQKQKKRTK. A 3-methylthioaspartic acid modification is found at D89.

It belongs to the universal ribosomal protein uS12 family. As to quaternary structure, part of the 30S ribosomal subunit. Contacts proteins S8 and S17. May interact with IF1 in the 30S initiation complex.

Its function is as follows. With S4 and S5 plays an important role in translational accuracy. In terms of biological role, interacts with and stabilizes bases of the 16S rRNA that are involved in tRNA selection in the A site and with the mRNA backbone. Located at the interface of the 30S and 50S subunits, it traverses the body of the 30S subunit contacting proteins on the other side and probably holding the rRNA structure together. The combined cluster of proteins S8, S12 and S17 appears to hold together the shoulder and platform of the 30S subunit. This Leptospira borgpetersenii serovar Hardjo-bovis (strain JB197) protein is Small ribosomal subunit protein uS12.